The primary structure comprises 218 residues: ADP-sugar pyrophosphatase (218 aa).

Residue Met1 is modified to N-acetylmethionine. The residue at position 10 (Ser10) is a Phosphoserine. Position 27 (Trp27) interacts with substrate. A Glycyl lysine isopeptide (Lys-Gly) (interchain with G-Cter in SUMO2) cross-link involves residue Lys41. Residue Thr44 is modified to Phosphothreonine. Substrate is bound by residues 45–46 (WE) and Arg83. The 141-residue stretch at 56–196 (KSADAVSVIP…EQHLTVDAKV (141 aa)) folds into the Nudix hydrolase domain. Residue Ala95 coordinates Mg(2+). The short motif at 96–117 (GFIEDGESPEAAALRELEEETG) is the Nudix box element. Phe97 is a substrate binding site. Mg(2+)-binding residues include Glu111 and Glu115. Position 132 (Asp132) interacts with substrate. Residue Glu165 participates in Mg(2+) binding. 2 positions are modified to N6-acetyllysine: Lys209 and Lys217.

The protein belongs to the Nudix hydrolase family. In terms of assembly, homodimer. Interacts with PARG. The cofactor is Mg(2+). In terms of processing, phosphorylation at Thr-44 is required for homodimer stability; dephosphorylation results in destabilization of the homodimer. Dephosphorylation at Thr-44 promotes the ATP-synthesis activity. Widely expressed. Most abundant in liver.

The protein resides in the nucleus. It carries out the reaction D-ribose 5-phosphate + ATP + H(+) = ADP-D-ribose + diphosphate. The enzyme catalyses ADP-D-ribose + H2O = D-ribose 5-phosphate + AMP + 2 H(+). It catalyses the reaction 8-oxo-dGDP + H2O = 8-oxo-dGMP + phosphate + H(+). Its function is as follows. Enzyme that can either act as an ADP-sugar pyrophosphatase in absence of diphosphate or catalyze the synthesis of ATP in presence of diphosphate. In absence of diphosphate, hydrolyzes with similar activities various modified nucleoside diphosphates such as ADP-ribose, ADP-mannose, ADP-glucose, 8-oxo-GDP and 8-oxo-dGDP. Can also hydrolyze other nucleotide sugars with low activity. In presence of diphosphate, mediates the synthesis of ATP in the nucleus by catalyzing the conversion of ADP-ribose to ATP and ribose 5-phosphate. Nuclear ATP synthesis takes place when dephosphorylated at Thr-44. Nuclear ATP generation is required for extensive chromatin remodeling events that are energy-consuming. Does not play a role in U8 snoRNA decapping activity. Binds U8 snoRNA. In Mus musculus (Mouse), this protein is ADP-sugar pyrophosphatase.